A 214-amino-acid polypeptide reads, in one-letter code: 3-isopropylmalate dehydratase small subunit (214 aa).

The protein belongs to the LeuD family. LeuD type 1 subfamily. Heterodimer of LeuC and LeuD.

The enzyme catalyses (2R,3S)-3-isopropylmalate = (2S)-2-isopropylmalate. It functions in the pathway amino-acid biosynthesis; L-leucine biosynthesis; L-leucine from 3-methyl-2-oxobutanoate: step 2/4. In terms of biological role, catalyzes the isomerization between 2-isopropylmalate and 3-isopropylmalate, via the formation of 2-isopropylmaleate. In Pseudomonas putida (strain W619), this protein is 3-isopropylmalate dehydratase small subunit.